Reading from the N-terminus, the 255-residue chain is Spectinomycin 9-adenylyltransferase (255 aa).

The enzyme catalyses spectinomycin + ATP = 9-O-adenylylspectinomycin + diphosphate. Mediates bacterial resistance to the antibiotic spectinomycin but not streptomycin. The chain is Spectinomycin 9-adenylyltransferase from Enterococcus faecalis (Streptococcus faecalis).